A 78-amino-acid polypeptide reads, in one-letter code: Small ribosomal subunit protein bS18A (78 aa).

It belongs to the bacterial ribosomal protein bS18 family. In terms of assembly, part of the 30S ribosomal subunit. Forms a tight heterodimer with protein bS6.

Binds as a heterodimer with protein bS6 to the central domain of the 16S rRNA, where it helps stabilize the platform of the 30S subunit. In Streptomyces avermitilis (strain ATCC 31267 / DSM 46492 / JCM 5070 / NBRC 14893 / NCIMB 12804 / NRRL 8165 / MA-4680), this protein is Small ribosomal subunit protein bS18A.